Consider the following 250-residue polypeptide: Probable transcriptional regulatory protein SYNPCC7002_A1640 (250 aa).

Belongs to the TACO1 family.

The protein resides in the cytoplasm. In Picosynechococcus sp. (strain ATCC 27264 / PCC 7002 / PR-6) (Agmenellum quadruplicatum), this protein is Probable transcriptional regulatory protein SYNPCC7002_A1640.